The primary structure comprises 341 residues: NADH-quinone oxidoreductase subunit H (341 aa).

8 consecutive transmembrane segments (helical) span residues 16-36 (LLII…AVAY), 86-106 (VVFV…WAVI), 119-139 (VGVL…IMAG), 165-185 (IGFI…SDVV), 191-211 (MWFI…GLAE), 254-274 (GAMT…LGWL), 276-296 (IPGL…FLWV), and 315-335 (VFLP…TAFG).

The protein belongs to the complex I subunit 1 family. In terms of assembly, NDH-1 is composed of 14 different subunits. Subunits NuoA, H, J, K, L, M, N constitute the membrane sector of the complex.

Its subcellular location is the cell inner membrane. The enzyme catalyses a quinone + NADH + 5 H(+)(in) = a quinol + NAD(+) + 4 H(+)(out). In terms of biological role, NDH-1 shuttles electrons from NADH, via FMN and iron-sulfur (Fe-S) centers, to quinones in the respiratory chain. The immediate electron acceptor for the enzyme in this species is believed to be ubiquinone. Couples the redox reaction to proton translocation (for every two electrons transferred, four hydrogen ions are translocated across the cytoplasmic membrane), and thus conserves the redox energy in a proton gradient. This subunit may bind ubiquinone. This chain is NADH-quinone oxidoreductase subunit H, found in Paramagnetospirillum magneticum (strain ATCC 700264 / AMB-1) (Magnetospirillum magneticum).